The primary structure comprises 178 residues: MVVAAAIREEIEIPEGVEVIINNNEVTVKGPNGEDSRKFTYPNVDITEVENNVVLETSFPRKKDKAMIGTTKAHISNMITGVTDGFEYHMKIVFAHFPMTVKVNKDVVVIDNFLGERHPRTAKVVGSAKVVVKGDEVTITGINKEHVGQTMANLEQATKIKGRDPRVFQDGIYLISKE.

It belongs to the universal ribosomal protein uL6 family. Part of the 50S ribosomal subunit.

In terms of biological role, this protein binds to the 23S rRNA, and is important in its secondary structure. It is located near the subunit interface in the base of the L7/L12 stalk, and near the tRNA binding site of the peptidyltransferase center. This chain is Large ribosomal subunit protein uL6, found in Methanobrevibacter smithii (strain ATCC 35061 / DSM 861 / OCM 144 / PS).